The following is a 433-amino-acid chain: Mitochondrial distribution and morphology protein 12 (433 aa).

One can recognise an SMP-LTD domain in the interval 1-433 (MSIDIDWERA…VYPSFWTFLI (433 aa)). Disordered stretches follow at residues 62–113 (LSDP…GGQM), 180–279 (TPLG…RMRE), and 356–376 (GPET…SPRR). Over residues 81–96 (SEERSPTREPVDRYGN) the composition is skewed to basic and acidic residues. Residues 214-236 (SAQSRPSTANTGNTLPSRDSMSV) are compositionally biased toward polar residues. Positions 268 to 279 (PLDDTPPRRMRE) are enriched in basic and acidic residues.

This sequence belongs to the MDM12 family. In terms of assembly, component of the ER-mitochondria encounter structure (ERMES) or MDM complex, composed of MMM1, MDM10, MDM12 and MDM34. An MMM1 homodimer associates with one molecule of MDM12 on each side in a pairwise head-to-tail manner, and the SMP-LTD domains of MMM1 and MDM12 generate a continuous hydrophobic tunnel for phospholipid trafficking.

The protein localises to the mitochondrion outer membrane. The protein resides in the endoplasmic reticulum membrane. Functionally, component of the ERMES/MDM complex, which serves as a molecular tether to connect the endoplasmic reticulum (ER) and mitochondria. Components of this complex are involved in the control of mitochondrial shape and protein biogenesis, and function in nonvesicular lipid trafficking between the ER and mitochondria. MDM12 is required for the interaction of the ER-resident membrane protein MMM1 and the outer mitochondrial membrane-resident beta-barrel protein MDM10. The MDM12-MMM1 subcomplex functions in the major beta-barrel assembly pathway that is responsible for biogenesis of all mitochondrial outer membrane beta-barrel proteins, and acts in a late step after the SAM complex. The MDM10-MDM12-MMM1 subcomplex further acts in the TOM40-specific pathway after the action of the MDM12-MMM1 complex. Essential for establishing and maintaining the structure of mitochondria and maintenance of mtDNA nucleoids. The protein is Mitochondrial distribution and morphology protein 12 of Ajellomyces capsulatus (strain NAm1 / WU24) (Darling's disease fungus).